A 162-amino-acid chain; its full sequence is Phosphopantetheine adenylyltransferase (162 aa).

Residue Thr10 coordinates substrate. ATP is bound by residues 10-11 (TF) and His18. 3 residues coordinate substrate: Lys42, Leu74, and Arg88. ATP-binding positions include 89–91 (GLR), Glu99, and 124–130 (NSFISST).

This sequence belongs to the bacterial CoaD family. As to quaternary structure, homohexamer. It depends on Mg(2+) as a cofactor.

The protein localises to the cytoplasm. The enzyme catalyses (R)-4'-phosphopantetheine + ATP + H(+) = 3'-dephospho-CoA + diphosphate. Its pathway is cofactor biosynthesis; coenzyme A biosynthesis; CoA from (R)-pantothenate: step 4/5. Reversibly transfers an adenylyl group from ATP to 4'-phosphopantetheine, yielding dephospho-CoA (dPCoA) and pyrophosphate. The chain is Phosphopantetheine adenylyltransferase from Alteromonas mediterranea (strain DSM 17117 / CIP 110805 / LMG 28347 / Deep ecotype).